Reading from the N-terminus, the 302-residue chain is Tritrans,polycis-undecaprenyl-diphosphate synthase (geranylgeranyl-diphosphate specific) (302 aa).

Asp-33 is a catalytic residue. Asp-33 is a binding site for Mg(2+). Residues 34-37 and 78-80 contribute to the substrate site; these read GNRR and STE. The Proton acceptor role is filled by Asn-81. Substrate contacts are provided by residues Phe-82, Arg-84, Arg-203, and 209 to 211; that span reads RTS.

The protein belongs to the UPP synthase family. Homodimer. The cofactor is Mg(2+).

It carries out the reaction geranylgeranyl diphosphate + 7 isopentenyl diphosphate = tri-trans,hepta-cis-undecaprenyl diphosphate + 7 diphosphate. In terms of biological role, catalyzes the sequential condensation of isopentenyl diphosphate (IPP) with geranylgeranyl diphosphate (GGPP) to yield (2Z,6Z,10Z,14Z,18Z,22Z,26Z,30E,34E,38E)-undecaprenyl diphosphate (tritrans,heptacis-UPP). It is probably the precursor of glycosyl carrier lipids. The sequence is that of Tritrans,polycis-undecaprenyl-diphosphate synthase (geranylgeranyl-diphosphate specific) from Halobacterium salinarum (strain ATCC 700922 / JCM 11081 / NRC-1) (Halobacterium halobium).